The chain runs to 281 residues: MKIRNPAHAGTFYPATREELVKSIESSFTHPLGPGRLPQRGGGSGEQAIAYIPPHAGYMYSGPIAAHVYYDMSLGRKPDVVVLLGPNHTGLGLAASLWDEGVWRTPLGEVEVDSEAGRLVVEYSGIVAPDDEGHIYEHSLEVQLPFLQYLYGGDFRIVPIVVLHQTLDISIRIARAYHRLREENGVNAVLVATSDLNHYEPYEENKRKDLLLLKAIEEGDPEAVFKTIEAHAISACGPSPIAAAVEAGRLAGVKPRVLAYANSGDVTGEKAWVVGYPAVRV.

This sequence belongs to the MEMO1 family.

This is MEMO1 family protein APE_1771 from Aeropyrum pernix (strain ATCC 700893 / DSM 11879 / JCM 9820 / NBRC 100138 / K1).